We begin with the raw amino-acid sequence, 563 residues long: Delta-1-pyrroline-5-carboxylate dehydrogenase, mitochondrial (563 aa).

A mitochondrion-targeting transit peptide spans 1–24 (MLLPAPALRRALLSRPWTGAGLRW). Lysine 31 carries the post-translational modification N6-succinyllysine. At serine 44 the chain carries Phosphoserine. Lysine 52 bears the N6-acetyllysine mark. N6-acetyllysine; alternate is present on residues lysine 93, lysine 99, lysine 114, lysine 130, and lysine 175. N6-succinyllysine; alternate occurs at positions 93, 99, 114, 130, and 175. Residues serine 208, lysine 233, and 286 to 290 (GSVPT) contribute to the NAD(+) site. Glutamate 314 functions as the Proton acceptor in the catalytic mechanism. At lysine 318 the chain carries N6-acetyllysine. Lysine 347 bears the N6-succinyllysine mark. Cysteine 348 acts as the Nucleophile in catalysis. Residues lysine 365 and lysine 376 each carry the N6-acetyllysine modification. Lysine 395 is subject to N6-succinyllysine. Glutamate 447 is an NAD(+) binding site. Lysine 462 bears the N6-acetyllysine mark. At lysine 509 the chain carries N6-acetyllysine; alternate. Lysine 509 carries the post-translational modification N6-succinyllysine; alternate. A substrate-binding site is contributed by serine 513. N6-acetyllysine is present on residues lysine 531 and lysine 552.

This sequence belongs to the aldehyde dehydrogenase family. In terms of assembly, homodimer. As to expression, highest expression is found in liver followed by skeletal muscle, kidney, heart, brain, placenta, lung and pancreas.

It localises to the mitochondrion matrix. The enzyme catalyses L-glutamate 5-semialdehyde + NAD(+) + H2O = L-glutamate + NADH + 2 H(+). Its pathway is amino-acid degradation; L-proline degradation into L-glutamate; L-glutamate from L-proline: step 2/2. In terms of biological role, irreversible conversion of delta-1-pyrroline-5-carboxylate (P5C), derived either from proline or ornithine, to glutamate. This is a necessary step in the pathway interconnecting the urea and tricarboxylic acid cycles. The preferred substrate is glutamic gamma-semialdehyde, other substrates include succinic, glutaric and adipic semialdehydes. In Homo sapiens (Human), this protein is Delta-1-pyrroline-5-carboxylate dehydrogenase, mitochondrial (ALDH4A1).